The following is a 180-amino-acid chain: NADH-quinone oxidoreductase subunit I (180 aa).

4Fe-4S ferredoxin-type domains are found at residues 48–80 (IVLT…LQKA) and 90–119 (EFFR…LTPD). Residues C60, C63, C66, C70, C99, C102, C105, and C109 each coordinate [4Fe-4S] cluster. Residues 161–174 (KPKGDAEHEAKPID) show a composition bias toward basic and acidic residues. Positions 161 to 180 (KPKGDAEHEAKPIDVKSLLP) are disordered.

Belongs to the complex I 23 kDa subunit family. In terms of assembly, NDH-1 is composed of 14 different subunits. Subunits NuoA, H, J, K, L, M, N constitute the membrane sector of the complex. The cofactor is [4Fe-4S] cluster.

It is found in the cell inner membrane. The enzyme catalyses a quinone + NADH + 5 H(+)(in) = a quinol + NAD(+) + 4 H(+)(out). NDH-1 shuttles electrons from NADH, via FMN and iron-sulfur (Fe-S) centers, to quinones in the respiratory chain. The immediate electron acceptor for the enzyme in this species is believed to be ubiquinone. Couples the redox reaction to proton translocation (for every two electrons transferred, four hydrogen ions are translocated across the cytoplasmic membrane), and thus conserves the redox energy in a proton gradient. In Aeromonas salmonicida (strain A449), this protein is NADH-quinone oxidoreductase subunit I.